A 506-amino-acid polypeptide reads, in one-letter code: MKQILFMDTTLRDGEQSPGVNLNEQEKLQIARQLERLGIHVMEAGFAAASEGDFQSVKRIANTIQNATVMSLARAKESDIRRAYEAVKGAVSPRLHVFLATSDIHMKYKLCMSKEDVLDSIYRSVTLGKSLFPTVQFSAEDATRTARDFLAEAVEVAIRAGANVINIPDTVGYTNPEEYYSLFKYLQESVPSYEKAIFSCHCHDDLGMAVANSLAAVEGGALQVEGTINGIGERAGNAALEEVAVALHIRKDFYKAEPSMTLKEIKATSTLVSRLTGMVVPKNKAIVGANAFAHESGIHQDGVLKEVTTYEIIEPALVGESQNLFVLGKHSGRHAFTEKMKELGYEFTNDERDAVFEAFKKLADRKKEITEEDLRALMLGEAAFAAQQYNITQLQVHFVSNSTQCATVVLKDEEGNVFEDAATGSGSIEAIYNAIQRILGLECELADYRIQSITQGQDALAHVHVELKEGAHQVSGFGVAQDVLEASARAYVHAAGKLKSFIQLVK.

The Pyruvate carboxyltransferase domain occupies 4–266 (ILFMDTTLRD…EPSMTLKEIK (263 aa)). Residues D13, H201, H203, and N237 each contribute to the Mn(2+) site. The tract at residues 390-506 (NITQLQVHFV…KLKSFIQLVK (117 aa)) is regulatory domain.

This sequence belongs to the alpha-IPM synthase/homocitrate synthase family. LeuA type 1 subfamily. Homodimer. Requires Mn(2+) as cofactor.

Its subcellular location is the cytoplasm. The catalysed reaction is 3-methyl-2-oxobutanoate + acetyl-CoA + H2O = (2S)-2-isopropylmalate + CoA + H(+). Its pathway is amino-acid biosynthesis; L-leucine biosynthesis; L-leucine from 3-methyl-2-oxobutanoate: step 1/4. Its function is as follows. Catalyzes the condensation of the acetyl group of acetyl-CoA with 3-methyl-2-oxobutanoate (2-ketoisovalerate) to form 3-carboxy-3-hydroxy-4-methylpentanoate (2-isopropylmalate). The polypeptide is 2-isopropylmalate synthase (Bacillus cereus (strain 03BB102)).